Consider the following 183-residue polypeptide: GTP cyclohydrolase 1 (183 aa).

3 residues coordinate Zn(2+): Cys71, His74, and Cys142.

It belongs to the GTP cyclohydrolase I family. In terms of assembly, toroid-shaped homodecamer, composed of two pentamers of five dimers.

The catalysed reaction is GTP + H2O = 7,8-dihydroneopterin 3'-triphosphate + formate + H(+). It participates in cofactor biosynthesis; 7,8-dihydroneopterin triphosphate biosynthesis; 7,8-dihydroneopterin triphosphate from GTP: step 1/1. This Leptospira borgpetersenii serovar Hardjo-bovis (strain JB197) protein is GTP cyclohydrolase 1.